Reading from the N-terminus, the 316-residue chain is UDP-3-O-acylglucosamine N-acyltransferase 2 (316 aa).

His-230 acts as the Proton acceptor in catalysis.

The protein belongs to the transferase hexapeptide repeat family. LpxD subfamily. As to quaternary structure, homotrimer.

The catalysed reaction is a UDP-3-O-[(3R)-3-hydroxyacyl]-alpha-D-glucosamine + a (3R)-hydroxyacyl-[ACP] = a UDP-2-N,3-O-bis[(3R)-3-hydroxyacyl]-alpha-D-glucosamine + holo-[ACP] + H(+). Its pathway is bacterial outer membrane biogenesis; LPS lipid A biosynthesis. Functionally, catalyzes the N-acylation of UDP-3-O-acylglucosamine using 3-hydroxyacyl-ACP as the acyl donor. Is involved in the biosynthesis of lipid A, a phosphorylated glycolipid that anchors the lipopolysaccharide to the outer membrane of the cell. The protein is UDP-3-O-acylglucosamine N-acyltransferase 2 of Sulfurimonas denitrificans (strain ATCC 33889 / DSM 1251) (Thiomicrospira denitrificans (strain ATCC 33889 / DSM 1251)).